The primary structure comprises 87 residues: Small ribosomal subunit protein uS17 (87 aa).

The protein belongs to the universal ribosomal protein uS17 family. In terms of assembly, part of the 30S ribosomal subunit.

Its function is as follows. One of the primary rRNA binding proteins, it binds specifically to the 5'-end of 16S ribosomal RNA. This Neisseria gonorrhoeae (strain ATCC 700825 / FA 1090) protein is Small ribosomal subunit protein uS17.